The sequence spans 172 residues: Translation initiation factor IF-3 (172 aa).

It belongs to the IF-3 family. Monomer.

It localises to the cytoplasm. In terms of biological role, IF-3 binds to the 30S ribosomal subunit and shifts the equilibrium between 70S ribosomes and their 50S and 30S subunits in favor of the free subunits, thus enhancing the availability of 30S subunits on which protein synthesis initiation begins. This is Translation initiation factor IF-3 from Campylobacter curvus (strain 525.92).